Consider the following 236-residue polypeptide: Large ribosomal subunit protein uL1 (236 aa).

This sequence belongs to the universal ribosomal protein uL1 family. In terms of assembly, part of the 50S ribosomal subunit.

In terms of biological role, binds directly to 23S rRNA. The L1 stalk is quite mobile in the ribosome, and is involved in E site tRNA release. Functionally, protein L1 is also a translational repressor protein, it controls the translation of the L11 operon by binding to its mRNA. This chain is Large ribosomal subunit protein uL1, found in Acidobacterium capsulatum (strain ATCC 51196 / DSM 11244 / BCRC 80197 / JCM 7670 / NBRC 15755 / NCIMB 13165 / 161).